A 397-amino-acid polypeptide reads, in one-letter code: Keratinocyte differentiation factor 1 (397 aa).

Over residues 1 to 16 (MPRPGQPRPSSGPPRL) the composition is skewed to pro residues. Disordered regions lie at residues 1–67 (MPRP…SAEP), 124–158 (EAAWAKEHNGVPPSPDRAPPSRRDGQKLKTSMGSS), and 191–214 (PLADPPPTRHSLPSTFTSSPRGSE). Basic and acidic residues predominate over residues 44 to 55 (RPDPKDPGHHGP). A compositionally biased stretch (polar residues) spans 201–211 (SLPSTFTSSPR). At Ser218 the chain carries Phosphoserine. 2 disordered regions span residues 304–339 (ISTRKSRSRPQTSEGRSARSTAPAAAPDSGHETMVG) and 361–392 (ARKLRPYGAPGYPASQDSSFQGTDTDSSGAPL). Residues 321-330 (ARSTAPAAAP) show a composition bias toward low complexity. The segment covering 375–388 (SQDSSFQGTDTDSS) has biased composition (polar residues).

The protein resides in the cytoplasm. The protein localises to the cell junction. Plays a role in the regulation of the epidermis formation during early development. Required both as an inhibitor of basal cell proliferation and a promoter of differentiation of basal progenitor cell progeny. The sequence is that of Keratinocyte differentiation factor 1 (Kdf1) from Rattus norvegicus (Rat).